Here is a 215-residue protein sequence, read N- to C-terminus: Proteasome subunit beta (215 aa).

The propeptide at 1–12 (MLGEIQDKVYKG) is removed in mature form; by autocatalysis. The active-site Nucleophile is threonine 13.

It belongs to the peptidase T1B family. In terms of assembly, the 20S proteasome core is composed of 14 alpha and 14 beta subunits that assemble into four stacked heptameric rings, resulting in a barrel-shaped structure. The two inner rings, each composed of seven catalytic beta subunits, are sandwiched by two outer rings, each composed of seven alpha subunits. The catalytic chamber with the active sites is on the inside of the barrel. Has a gated structure, the ends of the cylinder being occluded by the N-termini of the alpha-subunits. Is capped at one or both ends by the proteasome regulatory ATPase, PAN.

It is found in the cytoplasm. The enzyme catalyses Cleavage of peptide bonds with very broad specificity.. Its activity is regulated as follows. The formation of the proteasomal ATPase PAN-20S proteasome complex, via the docking of the C-termini of PAN into the intersubunit pockets in the alpha-rings, triggers opening of the gate for substrate entry. Interconversion between the open-gate and close-gate conformations leads to a dynamic regulation of the 20S proteasome proteolysis activity. In terms of biological role, component of the proteasome core, a large protease complex with broad specificity involved in protein degradation. The polypeptide is Proteasome subunit beta (Archaeoglobus profundus (strain DSM 5631 / JCM 9629 / NBRC 100127 / Av18)).